A 494-amino-acid polypeptide reads, in one-letter code: Arp2/3 complex-activating protein rickA (494 aa).

The tract at residues 312-494 is disordered; the sequence is PLENNIPPPP…RNSQKPSFVR (183 aa). A compositionally biased stretch (pro residues) spans 317–357; sequence IPPPPPPPPPLPDNNIPPPPPPPPPLPDNNIPPPPPPPPMA. The WH2 domain occupies 383 to 400; it reads DTSDLMREIAGPKKLKKV. The segment at 421-454 is central and acidic domains; it reads VNKPSGLESIFARRVAIEMSDSSSSESDSGNWSD. The segment covering 440–456 has biased composition (low complexity); that stretch reads SDSSSSESDSGNWSDVS. Residues 477-494 show a composition bias toward polar residues; sequence THAQKINNRNSQKPSFVR.

Its subcellular location is the cell surface. Functionally, recruits and activates the Arp2/3 complex, which in turn leads to actin polymerization, promoting Rickettsia motility during infection. This is Arp2/3 complex-activating protein rickA (rickA) from Rickettsia rickettsii.